A 519-amino-acid polypeptide reads, in one-letter code: 2-isopropylmalate synthase (519 aa).

Residues 5–267 (VVIFDTTLRD…STNINYKEIY (263 aa)) enclose the Pyruvate carboxyltransferase domain. Mn(2+) is bound by residues Asp14, His202, His204, and Asn238. Positions 392 to 519 (SLKFFSVQSI…LKILKDFKKK (128 aa)) are regulatory domain.

The protein belongs to the alpha-IPM synthase/homocitrate synthase family. LeuA type 1 subfamily. As to quaternary structure, homodimer. The cofactor is Mn(2+).

Its subcellular location is the cytoplasm. The catalysed reaction is 3-methyl-2-oxobutanoate + acetyl-CoA + H2O = (2S)-2-isopropylmalate + CoA + H(+). Its pathway is amino-acid biosynthesis; L-leucine biosynthesis; L-leucine from 3-methyl-2-oxobutanoate: step 1/4. Catalyzes the condensation of the acetyl group of acetyl-CoA with 3-methyl-2-oxobutanoate (2-ketoisovalerate) to form 3-carboxy-3-hydroxy-4-methylpentanoate (2-isopropylmalate). The protein is 2-isopropylmalate synthase of Buchnera aphidicola subsp. Acyrthosiphon pisum (strain APS) (Acyrthosiphon pisum symbiotic bacterium).